A 206-amino-acid chain; its full sequence is Ribosomal RNA large subunit methyltransferase E (206 aa).

The S-adenosyl-L-methionine site is built by Gly60, Trp62, Asp80, Asp96, and Asp121. The active-site Proton acceptor is the Lys161.

The protein belongs to the class I-like SAM-binding methyltransferase superfamily. RNA methyltransferase RlmE family.

It is found in the cytoplasm. The enzyme catalyses uridine(2552) in 23S rRNA + S-adenosyl-L-methionine = 2'-O-methyluridine(2552) in 23S rRNA + S-adenosyl-L-homocysteine + H(+). Its function is as follows. Specifically methylates the uridine in position 2552 of 23S rRNA at the 2'-O position of the ribose in the fully assembled 50S ribosomal subunit. The protein is Ribosomal RNA large subunit methyltransferase E of Saccharophagus degradans (strain 2-40 / ATCC 43961 / DSM 17024).